A 273-amino-acid polypeptide reads, in one-letter code: Methylthioribulose-1-phosphate dehydratase (273 aa).

A disordered region spans residues 1-27 (MCPTCPPSAASASSENNNTDNNDHLVL). A substrate-binding site is contributed by cysteine 114. Positions 132 and 134 each coordinate Zn(2+). Glutamate 168 serves as the catalytic Proton donor/acceptor. Residue histidine 225 participates in Zn(2+) binding.

It belongs to the aldolase class II family. MtnB subfamily. It depends on Zn(2+) as a cofactor.

It localises to the cytoplasm. It carries out the reaction 5-(methylsulfanyl)-D-ribulose 1-phosphate = 5-methylsulfanyl-2,3-dioxopentyl phosphate + H2O. The protein operates within amino-acid biosynthesis; L-methionine biosynthesis via salvage pathway; L-methionine from S-methyl-5-thio-alpha-D-ribose 1-phosphate: step 2/6. Functionally, catalyzes the dehydration of methylthioribulose-1-phosphate (MTRu-1-P) into 2,3-diketo-5-methylthiopentyl-1-phosphate (DK-MTP-1-P). The polypeptide is Methylthioribulose-1-phosphate dehydratase (Sordaria macrospora (strain ATCC MYA-333 / DSM 997 / K(L3346) / K-hell)).